The following is a 135-amino-acid chain: Endoribonuclease YbeY (135 aa).

Zn(2+)-binding residues include His-102, His-106, and His-112.

The protein belongs to the endoribonuclease YbeY family. Zn(2+) serves as cofactor.

It localises to the cytoplasm. Functionally, single strand-specific metallo-endoribonuclease involved in late-stage 70S ribosome quality control and in maturation of the 3' terminus of the 16S rRNA. The protein is Endoribonuclease YbeY of Rubrobacter xylanophilus (strain DSM 9941 / JCM 11954 / NBRC 16129 / PRD-1).